The primary structure comprises 205 residues: Ribosome maturation factor RimP (205 aa).

A compositionally biased stretch (polar residues) spans 1–13 (MSNAEATTSSDRT). Residues 1–27 (MSNAEATTSSDRTGTGKAEAESVHNPE) form a disordered region. The segment covering 18–27 (AEAESVHNPE) has biased composition (basic and acidic residues).

It belongs to the RimP family.

The protein localises to the cytoplasm. Required for maturation of 30S ribosomal subunits. In Arthrobacter sp. (strain FB24), this protein is Ribosome maturation factor RimP.